The following is a 160-amino-acid chain: Ureidoglycolate lyase (160 aa).

It belongs to the ureidoglycolate lyase family. Homodimer. Ni(2+) is required as a cofactor.

It carries out the reaction (S)-ureidoglycolate = urea + glyoxylate. It participates in nitrogen metabolism; (S)-allantoin degradation. In terms of biological role, catalyzes the catabolism of the allantoin degradation intermediate (S)-ureidoglycolate, generating urea and glyoxylate. Involved in the utilization of allantoin as nitrogen source. This chain is Ureidoglycolate lyase, found in Salmonella typhimurium (strain LT2 / SGSC1412 / ATCC 700720).